We begin with the raw amino-acid sequence, 802 residues long: Fibroblast growth factor receptor 3 (802 aa).

Positions 27-115 (PDYLMVEQPP…ILRNFTIRVT (89 aa)) constitute an Ig-like C2-type 1 domain. Cys-52 and Cys-98 are joined by a disulfide. Asn-74, Asn-87, and Asn-109 each carry an N-linked (GlcNAc...) asparagine glycan. Residues 116 to 148 (DLPSSGDDEDDDDDDDDETEDREPPRWTQPERM) are disordered. Acidic residues predominate over residues 121–136 (GDDEDDDDDDDDETED). Over residues 137–148 (REPPRWTQPERM) the composition is skewed to basic and acidic residues. 2 consecutive Ig-like C2-type domains span residues 140-233 (PRWT…YQLD) and 242-342 (PILQ…FWLH). The cysteines at positions 165 and 217 are disulfide-linked. N-linked (GlcNAc...) asparagine glycosylation is found at Asn-214, Asn-251, Asn-283, Asn-303, and Asn-315. Residues Cys-264 and Cys-326 are joined by a disulfide bond. A helical membrane pass occupies residues 363-383 (ITVLIVVTSTIVFILLVIIVI). Topologically, residues 384 to 802 (THLMKVPSKK…HQQHNGAIPT (419 aa)) are cytoplasmic. The 290-residue stretch at 462–751 (LTLGKPLGEG…LTVTSTNEYL (290 aa)) folds into the Protein kinase domain. ATP-binding positions include 468-476 (LGEGCFGQV) and Lys-498. Catalysis depends on Asp-607, which acts as the Proton acceptor. Residues Tyr-637, Tyr-638, Tyr-714, and Tyr-750 each carry the phosphotyrosine; by autocatalysis modification.

This sequence belongs to the protein kinase superfamily. Tyr protein kinase family. Fibroblast growth factor receptor subfamily. As to quaternary structure, monomer. Homodimer after ligand binding. Autophosphorylated. Binding of FGF family members together with heparan sulfate proteoglycan or heparin promotes receptor dimerization and autophosphorylation on tyrosine residues. Autophosphorylation occurs in trans between the two FGFR molecules present in the dimer.

The protein resides in the cell membrane. The enzyme catalyses L-tyrosyl-[protein] + ATP = O-phospho-L-tyrosyl-[protein] + ADP + H(+). Its activity is regulated as follows. Present in an inactive conformation in the absence of bound ligand. Ligand binding leads to dimerization and activation by autophosphorylation on tyrosine residues. Tyrosine-protein kinase that acts as a cell-surface receptor for fibroblast growth factors and plays an essential role in the regulation of cell proliferation, differentiation and apoptosis. Plays an essential role in the regulation of chondrocyte differentiation, proliferation and apoptosis, and is required for normal skeleton development. Regulates both osteogenesis and postnatal bone mineralization by osteoblasts. Promotes apoptosis in chondrocytes, but can also promote cancer cell proliferation. Phosphorylates PLCG1, CBL and FRS2. Ligand binding leads to the activation of several signaling cascades. Activation of PLCG1 leads to the production of the cellular signaling molecules diacylglycerol and inositol 1,4,5-trisphosphate. Phosphorylation of FRS2 triggers recruitment of GRB2, GAB1, PIK3R1 and SOS1, and mediates activation of RAS, MAPK1/ERK2, MAPK3/ERK1 and the MAP kinase signaling pathway, as well as of the AKT1 signaling pathway. The polypeptide is Fibroblast growth factor receptor 3 (fgfr3) (Xenopus laevis (African clawed frog)).